Reading from the N-terminus, the 362-residue chain is MRVADFSFELPESLIAHYPQPQRSGCRLLSLDGPTGALTHGIFTDLLDKLVPGDLLVFNNTRVIPARLFGRKASGGKLEVLVERVLDDHRVLAHVKASKAPKPGTELLLGDDESIHATMLARHDTLFELRFDDERDVFTILDAVGHMPLPPYIDRPDEDADRELYQTVYSQRLGAVAAPTAGLHFDEPMLAALREKGIEMAFVTLHVGAGTFQPVRVETIEDHIMHSEYAEVPQEVVDAVLACKARGNRVVAVGTTSVRSLESAAKSSDNGLIAPFFGDTKIFIYPGYHYQVVDALITNFHLPESTLIMLVSAFAGYKNTMNAYQQAVAEQYRFFSYGDAMFISRNPQASTEMISLNSTDNQ.

It belongs to the QueA family. As to quaternary structure, monomer.

Its subcellular location is the cytoplasm. The enzyme catalyses 7-aminomethyl-7-carbaguanosine(34) in tRNA + S-adenosyl-L-methionine = epoxyqueuosine(34) in tRNA + adenine + L-methionine + 2 H(+). Its pathway is tRNA modification; tRNA-queuosine biosynthesis. Its function is as follows. Transfers and isomerizes the ribose moiety from AdoMet to the 7-aminomethyl group of 7-deazaguanine (preQ1-tRNA) to give epoxyqueuosine (oQ-tRNA). The protein is S-adenosylmethionine:tRNA ribosyltransferase-isomerase of Yersinia enterocolitica serotype O:8 / biotype 1B (strain NCTC 13174 / 8081).